A 92-amino-acid chain; its full sequence is RNA-binding protein Hfq (92 aa).

In terms of domain architecture, Sm spans 9-68 (DPFLNALRRERVPVSIYLVNGIKLQGQVESFDQFVILLKNTVSQMVYKHAISTVVPSRPF).

This sequence belongs to the Hfq family. In terms of assembly, homohexamer.

Its function is as follows. RNA chaperone that binds small regulatory RNA (sRNAs) and mRNAs to facilitate mRNA translational regulation in response to envelope stress, environmental stress and changes in metabolite concentrations. Also binds with high specificity to tRNAs. This Shewanella piezotolerans (strain WP3 / JCM 13877) protein is RNA-binding protein Hfq.